Consider the following 173-residue polypeptide: MNQASLSVDAITNLIEAFHHHHPAVRSAAVDELIKLGSITVNLLIAAYDDSQDQGFQAQIIQVLAQIGDAKALKLLAEVVGTSVANHCQGNVRRIAARGLGKIASTTSNTEIINNAQEKLIWALLTPEDWGLRYAAAVSLQEIATPKAKAALQQAIAQETDPVVRSRMAIALS.

It belongs to the CpcE/RpcE/PecE family.

An enzyme involved in the biosynthesis of bilin. The polypeptide is Bilin biosynthesis protein PecF (pecF) (Nostoc sp. (strain PCC 7120 / SAG 25.82 / UTEX 2576)).